We begin with the raw amino-acid sequence, 199 residues long: Probable GTP-binding protein EngB (199 aa).

The 175-residue stretch at 22 to 196 (NWPEFAFSGR…GKFILDLVDS (175 aa)) folds into the EngB-type G domain. GTP-binding positions include 30 to 37 (GRSNVGKS), 57 to 61 (GRTQS), 75 to 78 (DLPG), 142 to 145 (TKVD), and 175 to 177 (FSA). Residues serine 37 and threonine 59 each contribute to the Mg(2+) site.

This sequence belongs to the TRAFAC class TrmE-Era-EngA-EngB-Septin-like GTPase superfamily. EngB GTPase family. It depends on Mg(2+) as a cofactor.

In terms of biological role, necessary for normal cell division and for the maintenance of normal septation. In Halothermothrix orenii (strain H 168 / OCM 544 / DSM 9562), this protein is Probable GTP-binding protein EngB.